Consider the following 1179-residue polypeptide: Integrin alpha-1 (1179 aa).

The N-terminal stretch at methionine 1 to serine 28 is a signal peptide. The Extracellular portion of the chain corresponds to phenylalanine 29–proline 1141. The FG-GAP 1 repeat unit spans residues asparagine 30–proline 91. A disulfide bridge connects residues cysteine 82 and cysteine 92. 9 N-linked (GlcNAc...) asparagine glycosylation sites follow: asparagine 100, asparagine 105, asparagine 112, asparagine 217, asparagine 317, asparagine 341, asparagine 402, asparagine 418, and asparagine 459. The stretch at threonine 101–serine 160 is one FG-GAP 2 repeat. The VWFA domain maps to isoleucine 175–alanine 364. The stretch at threonine 365 to histidine 417 is one FG-GAP 3 repeat. FG-GAP repeat units lie at residues glutamine 422–valine 474, asparagine 475–tyrosine 537, serine 556–lysine 614, and glutamine 618–asparagine 678. Residues aspartate 497, aspartate 499, aspartate 501, and aspartate 505 each coordinate Ca(2+). Asparagine 531 carries an N-linked (GlcNAc...) asparagine glycan. 8 residues coordinate Ca(2+): aspartate 579, asparagine 581, aspartate 583, aspartate 587, aspartate 641, asparagine 643, aspartate 645, and aspartate 649. Cysteine 687 and cysteine 696 are oxidised to a cystine. N-linked (GlcNAc...) asparagine glycosylation is found at asparagine 698, asparagine 747, and asparagine 779. Cysteine 702 and cysteine 755 are joined by a disulfide. Cysteine 807 and cysteine 813 are oxidised to a cystine. Asparagine 839, asparagine 882, asparagine 907, asparagine 938, asparagine 965, asparagine 973, and asparagine 1007 each carry an N-linked (GlcNAc...) asparagine glycan. A disulfide bridge links cysteine 877 with cysteine 885. Cystine bridges form between cysteine 1029/cysteine 1062 and cysteine 1065/cysteine 1072. Residues asparagine 1083, asparagine 1102, and asparagine 1113 are each glycosylated (N-linked (GlcNAc...) asparagine). The chain crosses the membrane as a helical span at residues leucine 1142–tryptophan 1164. The Cytoplasmic portion of the chain corresponds to lysine 1165–lysine 1179. The GFFKR motif motif lies at glycine 1167–arginine 1171.

The protein belongs to the integrin alpha chain family. As to quaternary structure, heterodimer of an alpha and a beta subunit. Alpha-1 associates with beta-1. Interacts with RAB21. Interacts (via cytoplasmic domain) with PTPN2; activates PTPN2 phosphatase activity towards EGFR and negatively regulates EGF signaling.

The protein resides in the membrane. Integrin alpha-1/beta-1 is a receptor for laminin and collagen. It recognizes the proline-hydroxylated sequence G-F-P-G-E-R in collagen. Involved in anchorage-dependent, negative regulation of EGF-stimulated cell growth. The protein is Integrin alpha-1 (Itga1) of Mus musculus (Mouse).